We begin with the raw amino-acid sequence, 463 residues long: Maintenance of mitochondrial morphology protein 1-2 (463 aa).

Over 1–23 (MVIPAELIQKALKQQSGWGFTEG) the chain is Lumenal. The helical transmembrane segment at 24-44 (LVLGQLSVIITVIIILKFVIF) threads the bilayer. Topologically, residues 45-463 (AENKSPKKGN…TGADTASGSS (419 aa)) are cytoplasmic. Residues 72–152 (GGQTANGVKT…VAGSTSNLAV (81 aa)) are disordered. The span at 108 to 122 (RPGSSRVSMVRSTSG) shows a compositional bias: polar residues. Positions 205–435 (APESLDWFNV…EPHQMIFILP (231 aa)) constitute an SMP-LTD domain.

Belongs to the MMM1 family. As to quaternary structure, homodimer. Component of the ER-mitochondria encounter structure (ERMES) or MDM complex, composed of MMM1, MDM10, MDM12 and MDM34. An MMM1 homodimer associates with one molecule of MDM12 on each side in a pairwise head-to-tail manner, and the SMP-LTD domains of MMM1 and MDM12 generate a continuous hydrophobic tunnel for phospholipid trafficking.

It localises to the endoplasmic reticulum membrane. In terms of biological role, component of the ERMES/MDM complex, which serves as a molecular tether to connect the endoplasmic reticulum (ER) and mitochondria. Components of this complex are involved in the control of mitochondrial shape and protein biogenesis, and function in nonvesicular lipid trafficking between the ER and mitochondria. The MDM12-MMM1 subcomplex functions in the major beta-barrel assembly pathway that is responsible for biogenesis of all outer membrane beta-barrel proteins, and acts in a late step after the SAM complex. The MDM10-MDM12-MMM1 subcomplex further acts in the TOM40-specific pathway after the action of the MDM12-MMM1 complex. Essential for establishing and maintaining the structure of mitochondria and maintenance of mtDNA nucleoids. This Yarrowia lipolytica (strain CLIB 122 / E 150) (Yeast) protein is Maintenance of mitochondrial morphology protein 1-2.